A 274-amino-acid chain; its full sequence is MINKFKKTIETSFEKKEHLKKCVDPLLKNTIISIINLLDKGKIRVAEKKNGTWITNQWIKKSILIYFCIFKNKLIISENMNFFDKISMKFEKWDHDDFCKHKIRAVPCSFVRKGSFIAKNSVIMPSYINIGAYIGENSTIDTWSTIGSCAQIGKNVHISGGVGIGGVLEPVQNNPTIIEDNCFIGARSEIVEGVVVESGSVISMGVFIGKSTKIYDSINNKIYYGRIPKKSVVIPGSLPSKNNRFNINCAIIIKKPDHETKRKIKMNSILHLNN.

Substrate contacts are provided by arginine 104 and aspartate 141.

Belongs to the transferase hexapeptide repeat family. Homotrimer.

It is found in the cytoplasm. The enzyme catalyses (S)-2,3,4,5-tetrahydrodipicolinate + succinyl-CoA + H2O = (S)-2-succinylamino-6-oxoheptanedioate + CoA. Its pathway is amino-acid biosynthesis; L-lysine biosynthesis via DAP pathway; LL-2,6-diaminopimelate from (S)-tetrahydrodipicolinate (succinylase route): step 1/3. This is 2,3,4,5-tetrahydropyridine-2,6-dicarboxylate N-succinyltransferase from Wigglesworthia glossinidia brevipalpis.